A 306-amino-acid polypeptide reads, in one-letter code: Tyrosine recombinase XerC (306 aa).

Positions 2 to 81 constitute a Core-binding (CB) domain; the sequence is AKASAAIEEF…ALRQFYGFLV (80 aa). Residues 102-283 form the Tyr recombinase domain; sequence PLPKTLSHKE…DAARLVALVN (182 aa). Active-site residues include R146, K170, H235, R238, and H261. Y270 (O-(3'-phospho-DNA)-tyrosine intermediate) is an active-site residue.

Belongs to the 'phage' integrase family. XerC subfamily. As to quaternary structure, forms a cyclic heterotetrameric complex composed of two molecules of XerC and two molecules of XerD.

It is found in the cytoplasm. Its function is as follows. Site-specific tyrosine recombinase, which acts by catalyzing the cutting and rejoining of the recombining DNA molecules. The XerC-XerD complex is essential to convert dimers of the bacterial chromosome into monomers to permit their segregation at cell division. It also contributes to the segregational stability of plasmids. The sequence is that of Tyrosine recombinase XerC from Erythrobacter litoralis (strain HTCC2594).